Consider the following 346-residue polypeptide: 3-keto-steroid reductase ERG27 (346 aa).

Residues leucine 19, threonine 42, and lysine 48 each contribute to the NADP(+) site. Residues serine 182 and tyrosine 205 each act as proton donor in the active site. NADP(+) is bound by residues tyrosine 205, lysine 209, and serine 241. Catalysis depends on lysine 209, which acts as the Lowers pKa of active site Tyr. A helical membrane pass occupies residues 242 to 262 (FSFFQYLNVFTYYGMLFLFYL). Asparagine 272 carries N-linked (GlcNAc...) asparagine glycosylation.

It belongs to the short-chain dehydrogenases/reductases (SDR) family. ERG27 subfamily. In terms of assembly, heterotetramer of ERG25, ERG26, ERG27 and ERG28. ERG28 acts as a scaffold to tether ERG27 and other 4,4-demethylation-related enzymes, forming a demethylation enzyme complex, in the endoplasmic reticulum. Interacts with ERG25 and ERG28. Also interacts with ERG7, but only in lipid particles.

It localises to the endoplasmic reticulum membrane. The protein resides in the lipid droplet. The enzyme catalyses 3-dehydro-4alpha-methylzymosterol + NADPH + H(+) = 4alpha-methylzymosterol + NADP(+). It participates in steroid biosynthesis; zymosterol biosynthesis; zymosterol from lanosterol: step 5/6. Functionally, 3-keto-steroid reductase; part of the third module of ergosterol biosynthesis pathway that includes the late steps of the pathway. ERG27 is a catalytic component of the C-4 demethylation complex that catalyzes the reduction of the keto group on the C-3. The third module or late pathway involves the ergosterol synthesis itself through consecutive reactions that mainly occur in the endoplasmic reticulum (ER) membrane. Firstly, the squalene synthase ERG9 catalyzes the condensation of 2 farnesyl pyrophosphate moieties to form squalene, which is the precursor of all steroids. Squalene synthase is crucial for balancing the incorporation of farnesyl diphosphate (FPP) into sterol and nonsterol isoprene synthesis. Secondly, the squalene epoxidase ERG1 catalyzes the stereospecific oxidation of squalene to (S)-2,3-epoxysqualene, which is considered to be a rate-limiting enzyme in steroid biosynthesis. Then, the lanosterol synthase ERG7 catalyzes the cyclization of (S)-2,3 oxidosqualene to lanosterol, a reaction that forms the sterol core. In the next steps, lanosterol is transformed to zymosterol through a complex process involving various demethylation, reduction and desaturation reactions. The lanosterol 14-alpha-demethylase ERG11 (also known as CYP51) catalyzes C14-demethylation of lanosterol to produce 4,4'-dimethyl cholesta-8,14,24-triene-3-beta-ol, which is critical for ergosterol biosynthesis. The C-14 reductase ERG24 reduces the C14=C15 double bond of 4,4-dimethyl-cholesta-8,14,24-trienol to produce 4,4-dimethyl-cholesta-8,24-dienol. 4,4-dimethyl-cholesta-8,24-dienol is substrate of the C-4 demethylation complex ERG25-ERG26-ERG27 in which ERG25 catalyzes the three-step monooxygenation required for the demethylation of 4,4-dimethyl and 4alpha-methylsterols, ERG26 catalyzes the oxidative decarboxylation that results in a reduction of the 3-beta-hydroxy group at the C-3 carbon to an oxo group, and ERG27 is responsible for the reduction of the keto group on the C-3. ERG28 has a role as a scaffold to help anchor ERG25, ERG26 and ERG27 to the endoplasmic reticulum and ERG29 regulates the activity of the iron-containing C4-methylsterol oxidase ERG25. Then, the sterol 24-C-methyltransferase ERG6 catalyzes the methyl transfer from S-adenosyl-methionine to the C-24 of zymosterol to form fecosterol. The C-8 sterol isomerase ERG2 catalyzes the reaction which results in unsaturation at C-7 in the B ring of sterols and thus converts fecosterol to episterol. The sterol-C5-desaturase ERG3 then catalyzes the introduction of a C-5 double bond in the B ring to produce 5-dehydroepisterol. The C-22 sterol desaturase ERG5 further converts 5-dehydroepisterol into ergosta-5,7,22,24(28)-tetraen-3beta-ol by forming the C-22(23) double bond in the sterol side chain. Finally, ergosta-5,7,22,24(28)-tetraen-3beta-ol is substrate of the C-24(28) sterol reductase ERG4 to produce ergosterol. In terms of biological role, facilitates the association of ERG7 with lipid particles preventing its digestion in the endoplasmic reticulum and the lipid particles. The protein is 3-keto-steroid reductase ERG27 of Candida albicans (strain SC5314 / ATCC MYA-2876) (Yeast).